Here is a 645-residue protein sequence, read N- to C-terminus: 1-phosphatidylinositol 4,5-bisphosphate phosphodiesterase zeta-1 (645 aa).

An EF-hand domain is found at 42–77 (CHFAHVKRIFKENDRHNQGRITTEDFRTIYRCIVHR). Residues 162–306 (QDMNKPLNDY…LKFKILVKNK (145 aa)) form the PI-PLC X-box domain. Active-site residues include His-177 and His-222. The PI-PLC Y-box domain maps to 385 to 501 (LSDLVIYTKA…GYVLKPDFLR (117 aa)). Positions 501–625 (RDTTLGFNPN…KGYRRVPLFS (125 aa)) constitute a C2 domain.

Interacts via its C2 domain with PtdIns(3)P and, to a lesser extent, PtdIns(5)P in vitro. It depends on Ca(2+) as a cofactor.

Its subcellular location is the nucleus. It is found in the cytoplasm. The protein localises to the perinuclear region. It catalyses the reaction a 1,2-diacyl-sn-glycero-3-phospho-(1D-myo-inositol-4,5-bisphosphate) + H2O = 1D-myo-inositol 1,4,5-trisphosphate + a 1,2-diacyl-sn-glycerol + H(+). In terms of biological role, the production of the second messenger molecules diacylglycerol (DAG) and inositol 1,4,5-trisphosphate (IP3) is mediated by activated phosphatidylinositol-specific phospholipase C enzymes. In vitro, hydrolyzes PtdIns(4,5)P2 in a Ca(2+)-dependent manner. Triggers intracellular Ca(2+) oscillations in oocytes solely during M phase and is involved in inducing oocyte activation and initiating embryonic development up to the blastocyst stage. Is therefore a strong candidate for the egg-activating soluble sperm factor that is transferred from the sperm into the egg cytoplasm following gamete membrane fusion. May exert an inhibitory effect on phospholipase-C-coupled processes that depend on calcium ions and protein kinase C, including CFTR trafficking and function. This is 1-phosphatidylinositol 4,5-bisphosphate phosphodiesterase zeta-1 from Rattus norvegicus (Rat).